A 375-amino-acid chain; its full sequence is Response regulator aspartate phosphatase E (375 aa).

Positions 24–95 (NVTDAEMLKA…HKKKLDNMRA (72 aa)) form a coiled coil. TPR repeat units lie at residues 96-129 (YYYN…IPTI), 177-210 (IQCH…AELL), 219-252 (ATAF…YRKI), 258-291 (PQAY…AVDF), 297-330 (MNLF…KGYP), and 333-366 (EELA…QKQI).

Belongs to the Rap family.

The protein localises to the cytoplasm. With respect to regulation, phosphatase activity is inhibited by the phosphatase regulator PhrE. In terms of biological role, involved in the regulation of sporulation. Acts as a phosphatase that specifically dephosphorylates the sporulation initiation phosphotransferase Spo0F and inhibits its activity. Probably plays a dispensable role in the overall context of sporulation initiation. The polypeptide is Response regulator aspartate phosphatase E (rapE) (Bacillus subtilis (strain 168)).